Consider the following 86-residue polypeptide: Probable acyl carrier protein CCNA_01221 (86 aa).

Residues 6 to 83 enclose the Carrier domain; sequence TVTDLSLREI…DLSKLINDLR (78 aa). An O-(pantetheine 4'-phosphoryl)serine modification is found at Ser43.

This sequence belongs to the acyl carrier protein (ACP) family.

The protein operates within lipid metabolism; sphingolipid metabolism. Functionally, involved in de novo bacterial ceramide synthesis. In Caulobacter vibrioides (strain NA1000 / CB15N) (Caulobacter crescentus), this protein is Probable acyl carrier protein CCNA_01221.